A 161-amino-acid polypeptide reads, in one-letter code: MEYNTSELCDTYIDVVDVVEPMFSNYGGCNSFGGSISTIKCFEDNGLIAEALQQDGEGKVLLVDGGGSLRRALLDASIAQLAVDNKWEGIIIYGSVRDVDALEDLDIGIQALASIPVGADENSVGELEIPVNFGGVTFLPLDHVYADNTGIILSPEPLDME.

This sequence belongs to the RraA family. As to quaternary structure, homotrimer. Binds to both RNA-binding sites in the C-terminal region of Rne and to RhlB.

The protein resides in the cytoplasm. Functionally, globally modulates RNA abundance by binding to RNase E (Rne) and regulating its endonucleolytic activity. Can modulate Rne action in a substrate-dependent manner by altering the composition of the degradosome. Modulates RNA-binding and helicase activities of the degradosome. This is Regulator of ribonuclease activity A from Shewanella sediminis (strain HAW-EB3).